The sequence spans 505 residues: T-cell activation GTPase-activating protein 1 (505 aa).

Disordered stretches follow at residues 81-147, 160-212, 242-293, 311-339, and 414-441; these read DDSL…SESS, QQDR…DPFT, QGHI…QREI, RTSS…SQLS, and KPST…HRLS. The span at 90–102 shows a compositional bias: polar residues; that stretch reads SDVSTLQNDSAYD. A compositionally biased stretch (acidic residues) spans 203 to 212; the sequence is EGDEAEDPFT. A compositionally biased stretch (low complexity) spans 250-262; sequence SRSSPGESLGSSP. Basic and acidic residues-rich tracts occupy residues 283-292 and 318-336; these read KTDKTKPQRE and EKSK…RKES.

This is T-cell activation GTPase-activating protein 1 (Tagap1) from Mus musculus (Mouse).